The chain runs to 230 residues: Urease accessory protein UreF (230 aa).

It belongs to the UreF family. As to quaternary structure, ureD, UreF and UreG form a complex that acts as a GTP-hydrolysis-dependent molecular chaperone, activating the urease apoprotein by helping to assemble the nickel containing metallocenter of UreC. The UreE protein probably delivers the nickel.

Its subcellular location is the cytoplasm. Its function is as follows. Required for maturation of urease via the functional incorporation of the urease nickel metallocenter. In Polynucleobacter asymbioticus (strain DSM 18221 / CIP 109841 / QLW-P1DMWA-1) (Polynucleobacter necessarius subsp. asymbioticus), this protein is Urease accessory protein UreF.